Consider the following 872-residue polypeptide: DNA mismatch repair protein MutS (872 aa).

Residue 602-609 (GPNMSGKS) coordinates ATP.

Belongs to the DNA mismatch repair MutS family.

Functionally, this protein is involved in the repair of mismatches in DNA. It is possible that it carries out the mismatch recognition step. This protein has a weak ATPase activity. The polypeptide is DNA mismatch repair protein MutS (Staphylococcus aureus (strain MRSA252)).